We begin with the raw amino-acid sequence, 280 residues long: 3-methyl-2-oxobutanoate hydroxymethyltransferase (280 aa).

The Mg(2+) site is built by Asp-49 and Asp-88. 3-methyl-2-oxobutanoate contacts are provided by residues 49–50 (DS), Asp-88, and Lys-118. Glu-120 lines the Mg(2+) pocket. Glu-187 acts as the Proton acceptor in catalysis.

The protein belongs to the PanB family. As to quaternary structure, homodecamer; pentamer of dimers. The cofactor is Mg(2+).

The protein localises to the cytoplasm. It catalyses the reaction 3-methyl-2-oxobutanoate + (6R)-5,10-methylene-5,6,7,8-tetrahydrofolate + H2O = 2-dehydropantoate + (6S)-5,6,7,8-tetrahydrofolate. Its pathway is cofactor biosynthesis; (R)-pantothenate biosynthesis; (R)-pantoate from 3-methyl-2-oxobutanoate: step 1/2. Catalyzes the reversible reaction in which hydroxymethyl group from 5,10-methylenetetrahydrofolate is transferred onto alpha-ketoisovalerate to form ketopantoate. In Xanthobacter autotrophicus (strain ATCC BAA-1158 / Py2), this protein is 3-methyl-2-oxobutanoate hydroxymethyltransferase.